The primary structure comprises 477 residues: MDLRLYDTLTRRKRAFTPIDPSNVRMYVCGPTVYDFAHIGNARPVIVFDVLFRLLRHLYGDDHVTYARNITDVDDKINDRAARDFPDLPLNEAIRKVTEKTAAQFQADVAALGCLPPTHQPRATEFVLPRTDGKTDMVTFIKQLIARGHAYEAGGEVLFDVRSMPDYGALSGRRLDEQKAGARVAVDAHKRNPADFVLWKLSSENEPGWDSPWGRGRPGWHIECSAMSTAYLGDVFDIHGGGLDLIFPHHENEIAQSRCAHGTHAMANYWMHNGFLQVEGEKMSKSLGNFVTINELLTTEKFGGRKWPGEVLRLNMLRTHYRQPIDWTIKALEESETILRRVCGRIKQFEYARRGMPTKERSVQLNLPPEILEALVDDLNTPLMLSRIGELSYDDAFDHALLSIGIDVLSYARWLRSQEQYASSNVDELVVARLEARMRKDFKESDRIRDELAAMGVVLKDGKDADGKPVTTWEIAR.

C29 provides a ligand contact to Zn(2+). A 'HIGH' region motif is present at residues P31 to N41. Zn(2+)-binding residues include C224, H249, and E253. The short motif at K282–S286 is the 'KMSKS' region element. Residue K285 participates in ATP binding.

The protein belongs to the class-I aminoacyl-tRNA synthetase family. In terms of assembly, monomer. It depends on Zn(2+) as a cofactor.

It is found in the cytoplasm. The enzyme catalyses tRNA(Cys) + L-cysteine + ATP = L-cysteinyl-tRNA(Cys) + AMP + diphosphate. This chain is Cysteine--tRNA ligase, found in Nitrobacter winogradskyi (strain ATCC 25391 / DSM 10237 / CIP 104748 / NCIMB 11846 / Nb-255).